We begin with the raw amino-acid sequence, 616 residues long: Protein NRT1/ PTR FAMILY 2.11 (616 aa).

The interval 1–22 (MERKPLELESTDNHQNPSSAVY) is disordered. 12 helical membrane-spanning segments follow: residues 59–79 (FEKL…TAVF), 87–107 (ATII…AAFL), 118–138 (LSVA…TAAV), 159–179 (GGQI…AGGI), 205–225 (FFNW…TLVV), 233–253 (WTIG…IFFA), 349–369 (VKCI…YLTI), 392–412 (FVIP…VFIV), 435–455 (LQRI…AGFV), 483–503 (AMWL…AAIG), 519–539 (FAGS…SFLI), and 566–586 (LFYF…LVMS).

This sequence belongs to the major facilitator superfamily. Proton-dependent oligopeptide transporter (POT/PTR) (TC 2.A.17) family. As to expression, expressed in roots. Detected in shoots, stems and flowers. Expressed in veins and in the root vasculature with highest expression in lateral branching points.

Its subcellular location is the cell membrane. High-affinity, proton-dependent glucosinolate-specific transporter. Involved in apoplasmic phloem-loading of glucosinolates and in bidirectional long-distance transport of aliphatic but not indole glucosinolates. May be involved in removal of glucosinolates from the xylem in roots. The polypeptide is Protein NRT1/ PTR FAMILY 2.11 (NPF2.11) (Arabidopsis thaliana (Mouse-ear cress)).